Here is a 602-residue protein sequence, read N- to C-terminus: MEISLVPLENGSAMTLRGGGEAGASCVQTPRGECGCPPTSGLNNQSKETLLRGRTTLEDANQGGRPLPPMAQELPQPRRLSAEDEEGEGDPGLGTVEEDQAPQDAGSLHHQRVLINISGLRFETQLGTLAQFPNTLLGDPAKRLHYFDPLRNEYFFDRNRPSFDGILYYYQSGGRLRRPVNVSLDVFADEIRFYQLGDEAMERFREDEGFIKEEEKPLPRNEFQRQVWLIFEYPESSGSARAIAIVSVLVILISIITFCLETLPEFRDERELLRHPPVPPQPPAPAPGINGSVSGALSSGPTVAPLLPRTLADPFFIVETTCVIWFTFELLVRFFACPSKAEFSRNIMNIIDVVAIFPYFITLGTELAEQQPGGGGQNGQQAMSLAILRVIRLVRVFRIFKLSRHSKGLQILGKTLQASMRELGLLIFFLFIGVILFSSAVYFAEADNHGSHFSSIPDAFWWAVVTMTTVGYGDMRPITVGGKIVGSLCAIAGVLTIALPVPVIVSNFNYFYHRETDHEEQAALKEEQGNQRRESGLDTGGQRKVSCSKASFCKTGGSLESSDSIRRGSCPLEKCHLKAKSNVDLRRSLYALCLDTSRETDL.

The segment at 1–202 is tetramerization domain; sequence MEISLVPLEN…FYQLGDEAME (202 aa). Topologically, residues 1-238 are cytoplasmic; that stretch reads MEISLVPLEN…LIFEYPESSG (238 aa). The segment at 58 to 107 is disordered; sequence EDANQGGRPLPPMAQELPQPRRLSAEDEEGEGDPGLGTVEEDQAPQDAGS. A Phosphoserine; by CK2 and PKA modification is found at Ser-81. Residue Lys-212 forms a Glycyl lysine isopeptide (Lys-Gly) (interchain with G-Cter in SUMO) linkage. Residues 239–260 traverse the membrane as a helical segment; that stretch reads SARAIAIVSVLVILISIITFCL. At 261–314 the chain is on the extracellular side; sequence ETLPEFRDERELLRHPPVPPQPPAPAPGINGSVSGALSSGPTVAPLLPRTLADP. The chain crosses the membrane as a helical span at residues 315 to 336; that stretch reads FFIVETTCVIWFTFELLVRFFA. Cys-337 is lipidated: S-palmitoyl cysteine. The Cytoplasmic segment spans residues 337-347; sequence CPSKAEFSRNI. A helical membrane pass occupies residues 348 to 368; sequence MNIIDVVAIFPYFITLGTELA. The Extracellular portion of the chain corresponds to 369-384; that stretch reads EQQPGGGGQNGQQAMS. The chain crosses the membrane as a helical; Voltage-sensor span at residues 385–405; it reads LAILRVIRLVRVFRIFKLSRH. Topologically, residues 406–420 are cytoplasmic; it reads SKGLQILGKTLQASM. Positions 407-420 are S4-S5 linker; sequence KGLQILGKTLQASM. The helical transmembrane segment at 421–442 threads the bilayer; sequence RELGLLIFFLFIGVILFSSAVY. At 443-456 the chain is on the extracellular side; sequence FAEADNHGSHFSSI. The helical intramembrane region spans 457 to 468; it reads PDAFWWAVVTMT. Residues 469-474 carry the Selectivity filter motif; it reads TVGYGD. Residues 469-476 lie within the membrane without spanning it; it reads TVGYGDMR. At 477–483 the chain is on the extracellular side; the sequence is PITVGGK. The chain crosses the membrane as a helical span at residues 484–512; the sequence is IVGSLCAIAGVLTIALPVPVIVSNFNYFY. The Cytoplasmic segment spans residues 513-602; it reads HRETDHEEQA…CLDTSRETDL (90 aa). Over residues 523–536 the composition is skewed to basic and acidic residues; it reads ALKEEQGNQRRESG. Positions 523–543 are disordered; sequence ALKEEQGNQRRESGLDTGGQR. Lys-525 participates in a covalent cross-link: Glycyl lysine isopeptide (Lys-Gly) (interchain with G-Cter in SUMO). 3 positions are modified to phosphoserine; by PKA: Ser-535, Ser-546, and Ser-569. A PDZ-binding motif is present at residues 600–602; it reads TDL.

It belongs to the potassium channel family. A (Shaker) (TC 1.A.1.2) subfamily. Kv1.5/KCNA5 sub-subfamily. As to quaternary structure, homotetramer and heterotetramer of potassium channel proteins. Interacts with DLG1, which enhances channel currents. Forms a ternary complex with DLG1 and CAV3. Interacts with KCNAB1. Interacts with UBE2I. Interacts with XIRP2; the interaction is required for normal action potential configuration in the heart. Glycosylated. Post-translationally, sumoylated on Lys-212, and Lys-525, preferentially with SUMO3. Sumoylation regulates the voltage sensitivity of the channel. In terms of tissue distribution, expressed equally in atrium, ventricle, aorta and skeletal muscle. Weaker expression in brain.

It is found in the cell membrane. The catalysed reaction is K(+)(in) = K(+)(out). In terms of biological role, voltage-gated potassium channel that mediates transmembrane potassium transport in excitable membranes. Forms tetrameric potassium-selective channels through which potassium ions pass in accordance with their electrochemical gradient. The channel alternates between opened and closed conformations in response to the voltage difference across the membrane. Can form functional homotetrameric channels and heterotetrameric channels that contain variable proportions of KCNA1, KCNA2, KCNA4, KCNA5, and possibly other family members as well; channel properties depend on the type of alpha subunits that are part of the channel. Channel properties are modulated by cytoplasmic beta subunits that regulate the subcellular location of the alpha subunits and promote rapid inactivation. Homotetrameric channels display rapid activation and slow inactivation. Required for normal electrical conduction including formation of the infranodal ventricular conduction system and normal action potential configuration, as a result of its interaction with XIRP2. May play a role in regulating the secretion of insulin in normal pancreatic islets. The chain is Potassium voltage-gated channel subfamily A member 5 (Kcna5) from Rattus norvegicus (Rat).